The primary structure comprises 334 residues: MKTQIQELRTQALADIESAGDAKAIDELNIRYLGRKGLVNDLMKGMAKVPADEKPLIGRLANELKNDLQDAFAKAVEKFGSGKEAGDVVDVTLPGRPRKVGGLHPLTTINLEICDIFTRLGFDIAQGPEVELDYYNFEALNFPKDHPARDMQDTFFVSDNVVLRTHTSPMQVRTMEKQKPPVRVIAPGKVYRCDSDITHTPMFAQVEGLVVDKGISFADLKGVLTTLVHQIFDDKTPLRFRPSFFPFTEPSAEVDIGCVMCKGSGCRVCSHTGWLEILGSGMVHPRVFEFVGYDTSEISGFAFGMGVERIAMLKYGIDDIRKYYENDLRFLNQF.

Residue E249 coordinates Mg(2+).

Belongs to the class-II aminoacyl-tRNA synthetase family. Phe-tRNA synthetase alpha subunit type 1 subfamily. In terms of assembly, tetramer of two alpha and two beta subunits. The cofactor is Mg(2+).

It localises to the cytoplasm. The enzyme catalyses tRNA(Phe) + L-phenylalanine + ATP = L-phenylalanyl-tRNA(Phe) + AMP + diphosphate + H(+). In Desulfatibacillum aliphaticivorans, this protein is Phenylalanine--tRNA ligase alpha subunit.